We begin with the raw amino-acid sequence, 582 residues long: MSSPNPEDVPRRPEPEPSSSNKKKKKRKWLRQEASIQALTRAGHGALQAGQNHEALNNFQRAFLLASKAPQTRDTPVLQACAFNLGAAYVETGDPARGLELLLRAHPEEKAQGRRHGDQCFNVALAYHALGELPQALAWYHRALGHYQPQGDQGEAWAKMGACYQALGQPELAAHCLQEASQAYAQERQLRAAALALGAAAGCMLKSGRHRVGEVVQVLEKSRRLAERSTERRLLGHLYNDLGLGYSQLQLFPLAVEAFLQALPLCWVPGEQATVLRNLGMAHNALGNYQEAREFHQKAADLHGSVGQRWEQGRSFGSLAFALSQLGDHKAARDNYLHALQAARDSGDMKGQWQACEGLGAAAARLGQYDQALKYYKEALAQCQKEPDSVRERLVAKLADTVRTRLAQVGLVQTHTLTSAPGRLQAPGGASQAEGTPAKAGSSTAGVQHRSSSGWEDEEFEEGHQKKKEERSANVPVRAGPGRPELCFLPGTVNHSHHLASSCPTFTKHTPCRGTVLGKASIYSPGPRAHLPFVGPGPPRAEYPSILVPNGPQANRSSRWPRESLSRSRQRRPMESGICTIV.

The disordered stretch occupies residues 1–31 (MSSPNPEDVPRRPEPEPSSSNKKKKKRKWLR). TPR repeat units lie at residues 36–69 (IQAL…ASKA), 79–112 (QACA…EKAQ), 117–150 (GDQC…YQPQ), 154–187 (GEAW…YAQE), 236–271 (GHLY…VPGE), 273–306 (ATVL…HGSV), 313–346 (GRSF…ARDS), and 353–386 (WQAC…CQKE). Disordered regions lie at residues 418 to 481 (TSAP…RAGP) and 548 to 582 (VPNG…CTIV). Over residues 441-454 (GSSTAGVQHRSSSG) the composition is skewed to polar residues. The segment covering 462–472 (EGHQKKKEERS) has biased composition (basic and acidic residues).

This chain is Tetratricopeptide repeat protein 24 (TTC24), found in Homo sapiens (Human).